Reading from the N-terminus, the 121-residue chain is Small ribosomal subunit protein uS13 (121 aa).

Residues Arg89 to Lys121 form a disordered region. Basic residues predominate over residues Gln100–Lys121.

Belongs to the universal ribosomal protein uS13 family. As to quaternary structure, part of the 30S ribosomal subunit. Forms a loose heterodimer with protein S19. Forms two bridges to the 50S subunit in the 70S ribosome.

Located at the top of the head of the 30S subunit, it contacts several helices of the 16S rRNA. In the 70S ribosome it contacts the 23S rRNA (bridge B1a) and protein L5 of the 50S subunit (bridge B1b), connecting the 2 subunits; these bridges are implicated in subunit movement. Contacts the tRNAs in the A and P-sites. The polypeptide is Small ribosomal subunit protein uS13 (Prochlorococcus marinus subsp. pastoris (strain CCMP1986 / NIES-2087 / MED4)).